The sequence spans 456 residues: DEAD-box ATP-dependent RNA helicase 10 (456 aa).

The Q motif motif lies at 9 to 37 (KTFAELGVREELVKACERLGWKNPSKIQA). The 184-residue stretch at 40–223 (LPFALEGKDV…RACLRNPVKI (184 aa)) folds into the Helicase ATP-binding domain. 53 to 60 (AQTGSGKT) is an ATP binding site. The DEAD box motif lies at 171–174 (DEAD). Residues 250-394 (YLVYILSEMP…EYPAEEDEVL (145 aa)) enclose the Helicase C-terminal domain. Positions 407-456 (SAMNMKESGGRKRRGEDDEESERFLGGNKDRGNKERGGNKDKKSSKKFKR) are disordered. Residues 434–448 (NKDRGNKERGGNKDK) show a composition bias toward basic and acidic residues.

This sequence belongs to the DEAD box helicase family. DDX47/RRP3 subfamily. Expressed in all tissues and organs examined including root, cotyledon, first and second leaves, third and fourth leaves, fifth and sixth leaves, shoot apex, flower, flower bud, cauline leaf and rosette leaves.

Its subcellular location is the nucleus. The protein localises to the nucleolus. The catalysed reaction is ATP + H2O = ADP + phosphate + H(+). In terms of biological role, involved in leaf polarity establishment by functioning cooperatively with AS2 to repress abaxial genes ARF3, ARF4, KAN1, KAN2, YAB1 and YAB5, and the knox homeobox genes KNAT1, KNAT2, KNAT6, and STM to promote adaxial development in leaf primordia at shoot apical meristems at high temperatures. Involved in the processing of pre-rRNA intermediates at high temperatures. The polypeptide is DEAD-box ATP-dependent RNA helicase 10 (RH10) (Arabidopsis thaliana (Mouse-ear cress)).